Reading from the N-terminus, the 404-residue chain is Ethanolamine-phosphate cytidylyltransferase (404 aa).

Residues 173–201 are disordered; it reads YADSFGKPPHPTPAGDTLSSEVSSQCPGG. Residues 189–201 are compositionally biased toward polar residues; sequence TLSSEVSSQCPGG. CTP is bound by residues 239 to 240, 247 to 250, K277, 325 to 328, and 354 to 358; these read AF, HVDF, HGKT, and SGSDL. S356 bears the Phosphoserine mark. Phosphothreonine is present on residues T359 and T360.

The protein belongs to the cytidylyltransferase family.

It catalyses the reaction phosphoethanolamine + CTP + H(+) = CDP-ethanolamine + diphosphate. The protein operates within phospholipid metabolism; phosphatidylethanolamine biosynthesis; phosphatidylethanolamine from ethanolamine: step 2/3. Functionally, ethanolamine-phosphate cytidylyltransferase that catalyzes the second step in the synthesis of phosphatidylethanolamine (PE) from ethanolamine via the CDP-ethanolamine pathway. Phosphatidylethanolamine is a dominant inner-leaflet phospholipid in cell membranes, where it plays a role in membrane function by structurally stabilizing membrane-anchored proteins, and participates in important cellular processes such as cell division, cell fusion, blood coagulation, and apoptosis. This Mus musculus (Mouse) protein is Ethanolamine-phosphate cytidylyltransferase (Pcyt2).